A 299-amino-acid chain; its full sequence is Taste receptor type 2 member 4 (299 aa).

Over 1-9 (MLRLFYFSA) the chain is Extracellular. The chain crosses the membrane as a helical span at residues 10-30 (IIASVILNFVGIIMNLFITVV). Residues 31–46 (NCKTWVKSHRISSSDR) are Cytoplasmic-facing. The helical transmembrane segment at 47-67 (ILFSLGITRFLMLGLFLVNTI) threads the bilayer. Topologically, residues 68–81 (YFVSSNTERSVYLS) are extracellular. Residues 82–102 (AFFVLCFMFLDSSSLWFVTLL) traverse the membrane as a helical segment. Over 103–131 (NILYCVKITNFQHSVFLLLKRNISPKIPR) the chain is Cytoplasmic. Residues 132-152 (LLLACVLISAFTTCLYITLSQ) form a helical membrane-spanning segment. The Extracellular segment spans residues 153–172 (ASPFPELVTTRNNTSFNINE). Residues N164 and N165 are each glycosylated (N-linked (GlcNAc...) asparagine). Residues 173 to 193 (GILSLVVSLVLSSSLQFIINV) traverse the membrane as a helical segment. The Cytoplasmic portion of the chain corresponds to 194 to 230 (TSASLLIHSLRRHIQKMQKNATGFWNPQTEAHVGAMK). A helical membrane pass occupies residues 231–251 (LMVYFLILYIPYSVATLVQYL). Residues 252-262 (PFYAGMDMGTK) lie on the Extracellular side of the membrane. Residues 263–283 (SICLIFATLYSPGHSVLIIIT) traverse the membrane as a helical segment. Topologically, residues 284–299 (HPKLKTTAKKILCFKK) are cytoplasmic.

The protein belongs to the G-protein coupled receptor T2R family.

The protein localises to the membrane. The protein resides in the cell projection. It is found in the cilium membrane. Its function is as follows. Gustducin-coupled receptor implicated in the perception of bitter compounds in the oral cavity and the gastrointestinal tract. Signals through PLCB2 and the calcium-regulated cation channel TRPM5. In airway epithelial cells, binding of denatonium increases the intracellular calcium ion concentration and stimulates ciliary beat frequency. The sequence is that of Taste receptor type 2 member 4 (TAS2R4) from Pan paniscus (Pygmy chimpanzee).